Consider the following 231-residue polypeptide: Biosynthetic peptidoglycan transglycosylase (231 aa).

The helical transmembrane segment at 12-34 (AAVLAGLALLLVALAVSYRWVPP) threads the bilayer.

Belongs to the glycosyltransferase 51 family.

It is found in the cell inner membrane. It catalyses the reaction [GlcNAc-(1-&gt;4)-Mur2Ac(oyl-L-Ala-gamma-D-Glu-L-Lys-D-Ala-D-Ala)](n)-di-trans,octa-cis-undecaprenyl diphosphate + beta-D-GlcNAc-(1-&gt;4)-Mur2Ac(oyl-L-Ala-gamma-D-Glu-L-Lys-D-Ala-D-Ala)-di-trans,octa-cis-undecaprenyl diphosphate = [GlcNAc-(1-&gt;4)-Mur2Ac(oyl-L-Ala-gamma-D-Glu-L-Lys-D-Ala-D-Ala)](n+1)-di-trans,octa-cis-undecaprenyl diphosphate + di-trans,octa-cis-undecaprenyl diphosphate + H(+). The protein operates within cell wall biogenesis; peptidoglycan biosynthesis. Peptidoglycan polymerase that catalyzes glycan chain elongation from lipid-linked precursors. The protein is Biosynthetic peptidoglycan transglycosylase of Rhodospirillum centenum (strain ATCC 51521 / SW).